The chain runs to 761 residues: Phosphoribosylformylglycinamidine synthase subunit PurL (761 aa).

Residues 1 to 13 (MTSRVDTVDNAAS) are compositionally biased toward polar residues. Residues 1 to 23 (MTSRVDTVDNAASTPDHPQPFAE) form a disordered region. Residue His-57 is part of the active site. 2 residues coordinate ATP: Tyr-60 and Lys-104. A Mg(2+)-binding site is contributed by Glu-106. Substrate is bound by residues 107 to 110 (SHNH) and Arg-129. The active-site Proton acceptor is the His-108. Position 130 (Asp-130) interacts with Mg(2+). Gln-259 lines the substrate pocket. Residue Asp-287 coordinates Mg(2+). Residue 331–333 (ESQ) participates in substrate binding. ATP-binding residues include Asn-519 and Gly-556. Asn-557 contributes to the Mg(2+) binding site. A substrate-binding site is contributed by Ser-559.

Belongs to the FGAMS family. In terms of assembly, monomer. Part of the FGAM synthase complex composed of 1 PurL, 1 PurQ and 2 PurS subunits.

The protein resides in the cytoplasm. It catalyses the reaction N(2)-formyl-N(1)-(5-phospho-beta-D-ribosyl)glycinamide + L-glutamine + ATP + H2O = 2-formamido-N(1)-(5-O-phospho-beta-D-ribosyl)acetamidine + L-glutamate + ADP + phosphate + H(+). The protein operates within purine metabolism; IMP biosynthesis via de novo pathway; 5-amino-1-(5-phospho-D-ribosyl)imidazole from N(2)-formyl-N(1)-(5-phospho-D-ribosyl)glycinamide: step 1/2. Functionally, part of the phosphoribosylformylglycinamidine synthase complex involved in the purines biosynthetic pathway. Catalyzes the ATP-dependent conversion of formylglycinamide ribonucleotide (FGAR) and glutamine to yield formylglycinamidine ribonucleotide (FGAM) and glutamate. The FGAM synthase complex is composed of three subunits. PurQ produces an ammonia molecule by converting glutamine to glutamate. PurL transfers the ammonia molecule to FGAR to form FGAM in an ATP-dependent manner. PurS interacts with PurQ and PurL and is thought to assist in the transfer of the ammonia molecule from PurQ to PurL. The chain is Phosphoribosylformylglycinamidine synthase subunit PurL from Mycobacteroides abscessus (strain ATCC 19977 / DSM 44196 / CCUG 20993 / CIP 104536 / JCM 13569 / NCTC 13031 / TMC 1543 / L948) (Mycobacterium abscessus).